Here is a 69-residue protein sequence, read N- to C-terminus: Small, acid-soluble spore protein 1 (69 aa).

Belongs to the alpha/beta-type SASP family.

In terms of biological role, SASP are bound to spore DNA. They are double-stranded DNA-binding proteins that cause DNA to change to an a-like conformation. They protect the DNA backbone from chemical and enzymatic cleavage and are thus involved in dormant spore's high resistance to UV light. The protein is Small, acid-soluble spore protein 1 (Su-1) of Sporosarcina ureae.